Reading from the N-terminus, the 175-residue chain is Large ribosomal subunit protein uL10 (175 aa).

This sequence belongs to the universal ribosomal protein uL10 family. As to quaternary structure, part of the ribosomal stalk of the 50S ribosomal subunit. The N-terminus interacts with L11 and the large rRNA to form the base of the stalk. The C-terminus forms an elongated spine to which L12 dimers bind in a sequential fashion forming a multimeric L10(L12)X complex.

Functionally, forms part of the ribosomal stalk, playing a central role in the interaction of the ribosome with GTP-bound translation factors. The polypeptide is Large ribosomal subunit protein uL10 (Mycobacterium sp. (strain JLS)).